The primary structure comprises 38 residues: Large ribosomal subunit protein bL36 (38 aa).

The protein belongs to the bacterial ribosomal protein bL36 family.

The protein is Large ribosomal subunit protein bL36 of Pseudothermotoga lettingae (strain ATCC BAA-301 / DSM 14385 / NBRC 107922 / TMO) (Thermotoga lettingae).